The sequence spans 164 residues: Pyruvoyl-dependent arginine decarboxylase (164 aa).

At Ser52 the chain carries Pyruvic acid (Ser).

This sequence belongs to the PdaD family. It depends on pyruvate as a cofactor.

It catalyses the reaction L-arginine + H(+) = agmatine + CO2. This Methanococcus maripaludis (strain C6 / ATCC BAA-1332) protein is Pyruvoyl-dependent arginine decarboxylase.